The sequence spans 259 residues: Phosphoribosylaminoimidazole-succinocarboxamide synthase (259 aa).

It belongs to the SAICAR synthetase family.

The catalysed reaction is 5-amino-1-(5-phospho-D-ribosyl)imidazole-4-carboxylate + L-aspartate + ATP = (2S)-2-[5-amino-1-(5-phospho-beta-D-ribosyl)imidazole-4-carboxamido]succinate + ADP + phosphate + 2 H(+). It participates in purine metabolism; IMP biosynthesis via de novo pathway; 5-amino-1-(5-phospho-D-ribosyl)imidazole-4-carboxamide from 5-amino-1-(5-phospho-D-ribosyl)imidazole-4-carboxylate: step 1/2. This chain is Phosphoribosylaminoimidazole-succinocarboxamide synthase, found in Hyphomonas neptunium (strain ATCC 15444).